The sequence spans 258 residues: PF03932 family protein CutC (258 aa).

This sequence belongs to the CutC family.

It localises to the cytoplasm. This is PF03932 family protein CutC from Mesorhizobium japonicum (strain LMG 29417 / CECT 9101 / MAFF 303099) (Mesorhizobium loti (strain MAFF 303099)).